The following is a 432-amino-acid chain: Glutamyl-tRNA reductase (432 aa).

Substrate-binding positions include 49–52 (TCNR), Ser-109, 114–116 (EGQ), and Gln-120. Residue Cys-50 is the Nucleophile of the active site. Residue 198–203 (GAGRMS) participates in NADP(+) binding.

The protein belongs to the glutamyl-tRNA reductase family. In terms of assembly, homodimer.

It carries out the reaction (S)-4-amino-5-oxopentanoate + tRNA(Glu) + NADP(+) = L-glutamyl-tRNA(Glu) + NADPH + H(+). It participates in porphyrin-containing compound metabolism; protoporphyrin-IX biosynthesis; 5-aminolevulinate from L-glutamyl-tRNA(Glu): step 1/2. Its pathway is porphyrin-containing compound metabolism; chlorophyll biosynthesis. Catalyzes the NADPH-dependent reduction of glutamyl-tRNA(Glu) to glutamate 1-semialdehyde (GSA). The chain is Glutamyl-tRNA reductase from Parasynechococcus marenigrum (strain WH8102).